Consider the following 149-residue polypeptide: D-aminoacyl-tRNA deacylase (149 aa).

The short motif at 141–142 (GP) is the Gly-cisPro motif, important for rejection of L-amino acids element.

This sequence belongs to the DTD family. Homodimer.

The protein localises to the cytoplasm. It catalyses the reaction glycyl-tRNA(Ala) + H2O = tRNA(Ala) + glycine + H(+). The catalysed reaction is a D-aminoacyl-tRNA + H2O = a tRNA + a D-alpha-amino acid + H(+). An aminoacyl-tRNA editing enzyme that deacylates mischarged D-aminoacyl-tRNAs. Also deacylates mischarged glycyl-tRNA(Ala), protecting cells against glycine mischarging by AlaRS. Acts via tRNA-based rather than protein-based catalysis; rejects L-amino acids rather than detecting D-amino acids in the active site. By recycling D-aminoacyl-tRNA to D-amino acids and free tRNA molecules, this enzyme counteracts the toxicity associated with the formation of D-aminoacyl-tRNA entities in vivo and helps enforce protein L-homochirality. The protein is D-aminoacyl-tRNA deacylase of Hydrogenovibrio crunogenus (strain DSM 25203 / XCL-2) (Thiomicrospira crunogena).